A 153-amino-acid chain; its full sequence is 3-hydroxyacyl-[acyl-carrier-protein] dehydratase FabZ (153 aa).

Residue His57 is part of the active site.

This sequence belongs to the thioester dehydratase family. FabZ subfamily.

Its subcellular location is the cytoplasm. It carries out the reaction a (3R)-hydroxyacyl-[ACP] = a (2E)-enoyl-[ACP] + H2O. Involved in unsaturated fatty acids biosynthesis. Catalyzes the dehydration of short chain beta-hydroxyacyl-ACPs and long chain saturated and unsaturated beta-hydroxyacyl-ACPs. The polypeptide is 3-hydroxyacyl-[acyl-carrier-protein] dehydratase FabZ (Xanthomonas campestris pv. campestris (strain 8004)).